Here is a 261-residue protein sequence, read N- to C-terminus: Cytochrome c oxidase subunit 3 (261 aa).

The Mitochondrial matrix segment spans residues 1 to 15 (MTHQSHAYHMVKPSP). Residues 16–34 (WPLTGALSALLMTSGLAMW) traverse the membrane as a helical segment. Over 35-40 (FHFYST) the chain is Mitochondrial intermembrane. A helical membrane pass occupies residues 41–66 (TLLTLGLLTNTLTMYQWWRDVMREGT). Topologically, residues 67–72 (YQGHHT) are mitochondrial matrix. The helical transmembrane segment at 73–105 (PPVQKGLRYGMILFITSEVFFFAGFFWAFYHSS) threads the bilayer. Topologically, residues 106–128 (LAPTPQLGGHWPPTGITPLNPLE) are mitochondrial intermembrane. The chain crosses the membrane as a helical span at residues 129–152 (VPLLNTSVLLASGVSITWAHHSLM). Topologically, residues 153 to 155 (ENN) are mitochondrial matrix. The chain crosses the membrane as a helical span at residues 156 to 183 (RNQMIQALLITILLGLYFTLLQASEYFE). The Mitochondrial intermembrane segment spans residues 184–190 (SPFTISD). A helical membrane pass occupies residues 191–223 (GIYGSTFFVATGFHGLHVIIGSTFLTICLIRQL). Over 224–232 (MFHFTSKHH) the chain is Mitochondrial matrix. Residues 233–256 (FGFQAAAWYWHFVDVVWLFLYVSI) traverse the membrane as a helical segment. The Mitochondrial intermembrane segment spans residues 257–261 (YWWGS).

It belongs to the cytochrome c oxidase subunit 3 family. In terms of assembly, component of the cytochrome c oxidase (complex IV, CIV), a multisubunit enzyme composed of 14 subunits. The complex is composed of a catalytic core of 3 subunits MT-CO1, MT-CO2 and MT-CO3, encoded in the mitochondrial DNA, and 11 supernumerary subunits COX4I, COX5A, COX5B, COX6A, COX6B, COX6C, COX7A, COX7B, COX7C, COX8 and NDUFA4, which are encoded in the nuclear genome. The complex exists as a monomer or a dimer and forms supercomplexes (SCs) in the inner mitochondrial membrane with NADH-ubiquinone oxidoreductase (complex I, CI) and ubiquinol-cytochrome c oxidoreductase (cytochrome b-c1 complex, complex III, CIII), resulting in different assemblies (supercomplex SCI(1)III(2)IV(1) and megacomplex MCI(2)III(2)IV(2)).

The protein resides in the mitochondrion inner membrane. The enzyme catalyses 4 Fe(II)-[cytochrome c] + O2 + 8 H(+)(in) = 4 Fe(III)-[cytochrome c] + 2 H2O + 4 H(+)(out). Functionally, component of the cytochrome c oxidase, the last enzyme in the mitochondrial electron transport chain which drives oxidative phosphorylation. The respiratory chain contains 3 multisubunit complexes succinate dehydrogenase (complex II, CII), ubiquinol-cytochrome c oxidoreductase (cytochrome b-c1 complex, complex III, CIII) and cytochrome c oxidase (complex IV, CIV), that cooperate to transfer electrons derived from NADH and succinate to molecular oxygen, creating an electrochemical gradient over the inner membrane that drives transmembrane transport and the ATP synthase. Cytochrome c oxidase is the component of the respiratory chain that catalyzes the reduction of oxygen to water. Electrons originating from reduced cytochrome c in the intermembrane space (IMS) are transferred via the dinuclear copper A center (CU(A)) of subunit 2 and heme A of subunit 1 to the active site in subunit 1, a binuclear center (BNC) formed by heme A3 and copper B (CU(B)). The BNC reduces molecular oxygen to 2 water molecules using 4 electrons from cytochrome c in the IMS and 4 protons from the mitochondrial matrix. The sequence is that of Cytochrome c oxidase subunit 3 (MT-CO3) from Pan troglodytes (Chimpanzee).